Reading from the N-terminus, the 46-residue chain is Viscotoxin-1-PS (46 aa).

3 disulfide bridges follow: C3–C40, C4–C32, and C16–C26.

This sequence belongs to the plant thionin (TC 1.C.44) family.

The protein resides in the secreted. In terms of biological role, thionins are small plant proteins which are toxic to animal cells. They seem to exert their toxic effect at the level of the cell membrane. Their precise function is not known. In Viscum album (European mistletoe), this protein is Viscotoxin-1-PS (THI2.4).